The primary structure comprises 132 residues: Acid shock protein (132 aa).

Residues 1-21 (MKKVLALIVAATMGLSSVAFA) form the signal peptide. Residues 22–69 (AETTAAATAAPAATSTTAAPAVEKAAPAKATHHKKHKATKQTTEQKAQ) constitute a propeptide that is removed on maturation. The span at 30-50 (AAPAATSTTAAPAVEKAAPAK) shows a compositional bias: low complexity. The segment at 30-132 (AAPAATSTTA…AKKSATAPAA (103 aa)) is disordered. Residues 51–60 (ATHHKKHKAT) are compositionally biased toward basic residues. Residues 61–99 (KQTTEQKAQAAKKAVKKAPAQKAQAAKKAVKKAPVQKAQ) are compositionally biased toward low complexity. The segment covering 100–124 (AAKKHVKKAPAQKAQAAKKHHKTAK) has biased composition (basic residues).

This sequence belongs to the Asr family. Proteolytic processing gives rise to the active protein.

It is found in the periplasm. In terms of biological role, required for growth and/or survival at acidic conditions. The protein is Acid shock protein of Yersinia enterocolitica serotype O:8 / biotype 1B (strain NCTC 13174 / 8081).